Here is a 473-residue protein sequence, read N- to C-terminus: Ribosomal RNA small subunit methyltransferase F (473 aa).

S-adenosyl-L-methionine-binding positions include 124–130 (ASAPGSK), Glu-148, Asp-175, and Asp-193. Cys-246 (nucleophile) is an active-site residue.

Belongs to the class I-like SAM-binding methyltransferase superfamily. RsmB/NOP family.

The protein resides in the cytoplasm. It catalyses the reaction cytidine(1407) in 16S rRNA + S-adenosyl-L-methionine = 5-methylcytidine(1407) in 16S rRNA + S-adenosyl-L-homocysteine + H(+). Functionally, specifically methylates the cytosine at position 1407 (m5C1407) of 16S rRNA. This chain is Ribosomal RNA small subunit methyltransferase F, found in Aliivibrio salmonicida (strain LFI1238) (Vibrio salmonicida (strain LFI1238)).